Consider the following 296-residue polypeptide: Protoheme IX farnesyltransferase (296 aa).

Transmembrane regions (helical) follow at residues 29–49 (LSGL…GHVA), 54–74 (ALTV…NCWM), 98–118 (FTAL…LALV), 121–141 (PLTA…YTPM), 147–167 (LALL…WTAA), 175–195 (GLAL…AVSI), 221–241 (WIAA…PLRV), 246–266 (YGAV…AGVG), and 275–295 (NFFL…FLGA).

The protein belongs to the UbiA prenyltransferase family. Protoheme IX farnesyltransferase subfamily.

It localises to the cell inner membrane. The catalysed reaction is heme b + (2E,6E)-farnesyl diphosphate + H2O = Fe(II)-heme o + diphosphate. It functions in the pathway porphyrin-containing compound metabolism; heme O biosynthesis; heme O from protoheme: step 1/1. Its function is as follows. Converts heme B (protoheme IX) to heme O by substitution of the vinyl group on carbon 2 of heme B porphyrin ring with a hydroxyethyl farnesyl side group. The sequence is that of Protoheme IX farnesyltransferase from Anaeromyxobacter sp. (strain Fw109-5).